Consider the following 693-residue polypeptide: Protein-glutamine gamma-glutamyltransferase E (693 aa).

At alanine 2 the chain carries N-acetylalanine. Residue tyrosine 111 is modified to Phosphotyrosine. At threonine 112 the chain carries Phosphothreonine. Residues alanine 222, asparagine 225, asparagine 227, aspartate 228, and asparagine 230 each contribute to the Ca(2+) site. Cysteine 273 is a catalytic residue. Residues aspartate 302, aspartate 304, asparagine 306, serine 308, and aspartate 325 each coordinate Ca(2+). Catalysis depends on residues histidine 331 and aspartate 354. The Ca(2+) site is built by asparagine 394, serine 416, glutamate 444, and glutamate 449.

This sequence belongs to the transglutaminase superfamily. Transglutaminase family. In terms of assembly, consists of two polypeptide chains, which are synthesized as a precursor form of a single polypeptide. It depends on Ca(2+) as a cofactor. Post-translationally, activated by proteolytic processing. In vitro activation is commonly achieved by cleavage with dispase, a neutral bacterial protease. Dispase cleavage site was proposed to lie between Ser-470 and Ser-471 or between Pro-465 and Phe-466. Physiological activation may be catalyzed by CTSL and, to a lesser extent, by CTSS, but not by CTSB, CTSD nor CTSV.

It localises to the cytoplasm. It carries out the reaction L-glutaminyl-[protein] + L-lysyl-[protein] = [protein]-L-lysyl-N(6)-5-L-glutamyl-[protein] + NH4(+). Its function is as follows. Catalyzes the calcium-dependent formation of isopeptide cross-links between glutamine and lysine residues in various proteins, as well as the conjugation of polyamines to proteins. Involved in the formation of the cornified envelope (CE), a specialized component consisting of covalent cross-links of proteins beneath the plasma membrane of terminally differentiated keratinocytes. Catalyzes small proline-rich proteins (SPRR1 and SPRR2) and LOR cross-linking to form small interchain oligomers, which are further cross-linked by TGM1 onto the growing CE scaffold. In hair follicles, involved in cross-linking structural proteins to hardening the inner root sheath. The protein is Protein-glutamine gamma-glutamyltransferase E (TGM3) of Homo sapiens (Human).